We begin with the raw amino-acid sequence, 1050 residues long: Elongation factor 3 (1050 aa).

2 residues coordinate ADP: V43 and H45. An HEAT 1 repeat occupies 46 to 83; sequence DVPVEFFEDLKKQIQSKDAKVSLAALDAYKHIASTNGL. S86 is a binding site for ADP. HEAT repeat units lie at residues 89 to 126, 127 to 165, 169 to 206, 208 to 244, 245 to 282, and 288 to 326; these read PYVV…AITP, TAVK…TAKA, LRMP…TIDN, DIEK…EVTM, ATLS…LVED, and PFMD…VGAV. 3 residues coordinate ADP: T395, H399, and E400. 2 consecutive ABC transporter domains span residues 429–646 and 672–998; these read DEGE…YYEL and VKVS…KKDD. The ADP site is built by N708, E927, N930, and H956. The tract at residues 980–1050 is disordered; that stretch reads GHNWVQGQGS…DAYVSSDEEF (71 aa). Positions 1013–1037 are enriched in basic residues; sequence AAKKKKKLSSAELRKKKKERMKKKK.

Belongs to the ABC transporter superfamily. ABCF family. EF3 subfamily. Monomer.

The protein resides in the cytoplasm. It catalyses the reaction ATP + H2O = ADP + phosphate + H(+). Its pathway is protein biosynthesis; polypeptide chain elongation. Ribosome-dependent ATPase that functions in cytoplasmic translation elongation. Required for the ATP-dependent release of deacylated tRNA from the ribosomal E-site during protein biosynthesis. Stimulates the eEF1A-dependent binding of aminoacyl-tRNA to the ribosomal A-site, which has reduced affinity for tRNA as long as the E-site is occupied. Assists translation termination by stimulating the release of nascent protein from the ribosome by release factors. The sequence is that of Elongation factor 3 (CEF3) from Candida albicans (strain SC5314 / ATCC MYA-2876) (Yeast).